The primary structure comprises 361 residues: Phosphoserine aminotransferase (361 aa).

Residue Arg43 participates in L-glutamate binding. Residues 77 to 78 (AS), Trp103, Thr153, Asp173, and Gln196 contribute to the pyridoxal 5'-phosphate site. At Lys197 the chain carries N6-(pyridoxal phosphate)lysine. 238–239 (NT) provides a ligand contact to pyridoxal 5'-phosphate.

This sequence belongs to the class-V pyridoxal-phosphate-dependent aminotransferase family. SerC subfamily. Homodimer. Pyridoxal 5'-phosphate serves as cofactor.

It is found in the cytoplasm. It catalyses the reaction O-phospho-L-serine + 2-oxoglutarate = 3-phosphooxypyruvate + L-glutamate. It carries out the reaction 4-(phosphooxy)-L-threonine + 2-oxoglutarate = (R)-3-hydroxy-2-oxo-4-phosphooxybutanoate + L-glutamate. The protein operates within amino-acid biosynthesis; L-serine biosynthesis; L-serine from 3-phospho-D-glycerate: step 2/3. It participates in cofactor biosynthesis; pyridoxine 5'-phosphate biosynthesis; pyridoxine 5'-phosphate from D-erythrose 4-phosphate: step 3/5. Its function is as follows. Catalyzes the reversible conversion of 3-phosphohydroxypyruvate to phosphoserine and of 3-hydroxy-2-oxo-4-phosphonooxybutanoate to phosphohydroxythreonine. This Pseudomonas aeruginosa (strain ATCC 15692 / DSM 22644 / CIP 104116 / JCM 14847 / LMG 12228 / 1C / PRS 101 / PAO1) protein is Phosphoserine aminotransferase.